A 93-amino-acid chain; its full sequence is Ribonuclease P protein component 1 (93 aa).

The protein belongs to the eukaryotic/archaeal RNase P protein component 1 family. Consists of a catalytic RNA component and at least 4-5 protein subunits.

Its subcellular location is the cytoplasm. It catalyses the reaction Endonucleolytic cleavage of RNA, removing 5'-extranucleotides from tRNA precursor.. Functionally, part of ribonuclease P, a protein complex that generates mature tRNA molecules by cleaving their 5'-ends. This chain is Ribonuclease P protein component 1, found in Methanosphaera stadtmanae (strain ATCC 43021 / DSM 3091 / JCM 11832 / MCB-3).